The sequence spans 716 residues: Polyribonucleotide nucleotidyltransferase (716 aa).

Positions 485 and 491 each coordinate Mg(2+). Positions 552–611 constitute a KH domain; that stretch reads PKITTISVPKEKIRDVIGSGGKVIREIVEYSGAKVDIGDDGTVTIAASNDEQAQKAIARI. Positions 621–689 constitute an S1 motif domain; the sequence is GRIYEGKVVK…DRGKVKLSMR (69 aa).

Belongs to the polyribonucleotide nucleotidyltransferase family. Mg(2+) serves as cofactor.

The protein resides in the cytoplasm. The catalysed reaction is RNA(n+1) + phosphate = RNA(n) + a ribonucleoside 5'-diphosphate. In terms of biological role, involved in mRNA degradation. Catalyzes the phosphorolysis of single-stranded polyribonucleotides processively in the 3'- to 5'-direction. This chain is Polyribonucleotide nucleotidyltransferase, found in Gluconobacter oxydans (strain 621H) (Gluconobacter suboxydans).